The following is a 126-amino-acid chain: Aspartate 1-decarboxylase (126 aa).

The active-site Schiff-base intermediate with substrate; via pyruvic acid is the Ser-25. Ser-25 carries the pyruvic acid (Ser) modification. Residue Thr-57 participates in substrate binding. Tyr-58 serves as the catalytic Proton donor. Gly-73–Ala-75 is a substrate binding site.

It belongs to the PanD family. As to quaternary structure, heterooctamer of four alpha and four beta subunits. Pyruvate is required as a cofactor. In terms of processing, is synthesized initially as an inactive proenzyme, which is activated by self-cleavage at a specific serine bond to produce a beta-subunit with a hydroxyl group at its C-terminus and an alpha-subunit with a pyruvoyl group at its N-terminus.

Its subcellular location is the cytoplasm. It carries out the reaction L-aspartate + H(+) = beta-alanine + CO2. It functions in the pathway cofactor biosynthesis; (R)-pantothenate biosynthesis; beta-alanine from L-aspartate: step 1/1. Its function is as follows. Catalyzes the pyruvoyl-dependent decarboxylation of aspartate to produce beta-alanine. This Marinomonas sp. (strain MWYL1) protein is Aspartate 1-decarboxylase.